A 545-amino-acid polypeptide reads, in one-letter code: 4-coumarate--CoA ligase 1 (545 aa).

6 residues coordinate ATP: Ser-192, Ser-193, Gly-194, Thr-195, Thr-196, and Lys-200. Residues Tyr-242 and Ser-246 each coordinate (E)-4-coumaroyl-AMP. Lys-263 contributes to the CoA binding site. The SBD1 stretch occupies residues 265 to 334 (DIAQFLELIP…AKFPNAKLGQ (70 aa)). Ala-312, Gln-334, Gly-335, Thr-339, and Met-347 together coordinate (E)-4-coumaroyl-AMP. Gln-334, Gly-335, and Thr-339 together coordinate ATP. Residues 335–402 (GYGMTEAGPV…IRGDQIMKGY (68 aa)) form an SBD2 region. 2 residues coordinate ATP: Asp-423 and Arg-438. (E)-4-coumaroyl-AMP-binding residues include Lys-440 and Lys-444. Lys-446 and Gly-447 together coordinate CoA. Lys-529 serves as a coordination point for ATP.

The protein belongs to the ATP-dependent AMP-binding enzyme family. Mg(2+) is required as a cofactor.

It carries out the reaction (E)-4-coumarate + ATP + CoA = (E)-4-coumaroyl-CoA + AMP + diphosphate. It catalyses the reaction (E)-4-coumarate + ATP + H(+) = (E)-4-coumaroyl-AMP + diphosphate. The enzyme catalyses (E)-4-coumaroyl-AMP + CoA = (E)-4-coumaroyl-CoA + AMP + H(+). It functions in the pathway phytoalexin biosynthesis; 3,4',5-trihydroxystilbene biosynthesis; 3,4',5-trihydroxystilbene from trans-4-coumarate: step 1/2. In terms of biological role, carboxylate--CoA ligase that may use 4-coumarate as substrate. Follows a two-step reaction mechanism, wherein the carboxylate substrate first undergoes adenylation by ATP, followed by a thioesterification in the presence of CoA to yield the final CoA thioester. The polypeptide is 4-coumarate--CoA ligase 1 (4CL1) (Solanum tuberosum (Potato)).